A 122-amino-acid chain; its full sequence is Large ribosomal subunit protein uL14 (122 aa).

Belongs to the universal ribosomal protein uL14 family. Part of the 50S ribosomal subunit. Forms a cluster with proteins L3 and L19. In the 70S ribosome, L14 and L19 interact and together make contacts with the 16S rRNA in bridges B5 and B8.

Binds to 23S rRNA. Forms part of two intersubunit bridges in the 70S ribosome. This chain is Large ribosomal subunit protein uL14, found in Phytoplasma mali (strain AT).